Consider the following 353-residue polypeptide: Photosystem II protein D1 (353 aa).

At threonine 2 the chain carries N-acetylthreonine. Phosphothreonine is present on threonine 2. A run of 3 helical transmembrane segments spans residues 29–46 (YIGWFGVLMIPTLLTATS), 118–133 (HFLLGVACYMGREWEL), and 142–156 (WIAVAYSAPVAAATA). Histidine 118 contacts chlorophyll a. Pheophytin a is bound at residue tyrosine 126. Positions 170 and 189 each coordinate [CaMn4O5] cluster. The helical transmembrane segment at 197 to 218 (FHMLGVAGVFGGSLFSAMHGSL) threads the bilayer. Position 198 (histidine 198) interacts with chlorophyll a. Residues histidine 215 and 264-265 (SF) contribute to the a quinone site. Histidine 215 serves as a coordination point for Fe cation. A Fe cation-binding site is contributed by histidine 272. Residues 274–288 (FLAAWPVVGIWFTAL) traverse the membrane as a helical segment. [CaMn4O5] cluster contacts are provided by histidine 332, glutamate 333, aspartate 342, and alanine 344. Positions 345 to 353 (SVEAPSTNG) are excised as a propeptide.

Belongs to the reaction center PufL/M/PsbA/D family. In terms of assembly, PSII is composed of 1 copy each of membrane proteins PsbA, PsbB, PsbC, PsbD, PsbE, PsbF, PsbH, PsbI, PsbJ, PsbK, PsbL, PsbM, PsbT, PsbX, PsbY, PsbZ, Psb30/Ycf12, at least 3 peripheral proteins of the oxygen-evolving complex and a large number of cofactors. It forms dimeric complexes. Requires The D1/D2 heterodimer binds P680, chlorophylls that are the primary electron donor of PSII, and subsequent electron acceptors. It shares a non-heme iron and each subunit binds pheophytin, quinone, additional chlorophylls, carotenoids and lipids. D1 provides most of the ligands for the Mn4-Ca-O5 cluster of the oxygen-evolving complex (OEC). There is also a Cl(-1) ion associated with D1 and D2, which is required for oxygen evolution. The PSII complex binds additional chlorophylls, carotenoids and specific lipids. as cofactor. Post-translationally, tyr-161 forms a radical intermediate that is referred to as redox-active TyrZ, YZ or Y-Z. In terms of processing, C-terminally processed by CTPA; processing is essential to allow assembly of the oxygen-evolving complex and thus photosynthetic growth.

The protein localises to the plastid. Its subcellular location is the chloroplast thylakoid membrane. The catalysed reaction is 2 a plastoquinone + 4 hnu + 2 H2O = 2 a plastoquinol + O2. In terms of biological role, photosystem II (PSII) is a light-driven water:plastoquinone oxidoreductase that uses light energy to abstract electrons from H(2)O, generating O(2) and a proton gradient subsequently used for ATP formation. It consists of a core antenna complex that captures photons, and an electron transfer chain that converts photonic excitation into a charge separation. The D1/D2 (PsbA/PsbD) reaction center heterodimer binds P680, the primary electron donor of PSII as well as several subsequent electron acceptors. The sequence is that of Photosystem II protein D1 from Acorus calamus (Sweet flag).